We begin with the raw amino-acid sequence, 210 residues long: FMN-dependent NADH:quinone oxidoreductase 9 (210 aa).

FMN contacts are provided by residues S10 and 16–18 (SAS).

The protein belongs to the azoreductase type 1 family. Homodimer. Requires FMN as cofactor.

It catalyses the reaction 2 a quinone + NADH + H(+) = 2 a 1,4-benzosemiquinone + NAD(+). It carries out the reaction N,N-dimethyl-1,4-phenylenediamine + anthranilate + 2 NAD(+) = 2-(4-dimethylaminophenyl)diazenylbenzoate + 2 NADH + 2 H(+). Quinone reductase that provides resistance to thiol-specific stress caused by electrophilic quinones. Its function is as follows. Also exhibits azoreductase activity. Catalyzes the reductive cleavage of the azo bond in aromatic azo compounds to the corresponding amines. The polypeptide is FMN-dependent NADH:quinone oxidoreductase 9 (Burkholderia lata (strain ATCC 17760 / DSM 23089 / LMG 22485 / NCIMB 9086 / R18194 / 383)).